Reading from the N-terminus, the 326-residue chain is Pyruvate dehydrogenase E1 component subunit beta (326 aa).

Glutamate 60 is a binding site for thiamine diphosphate. Isoleucine 113, alanine 161, isoleucine 162, and asparagine 166 together coordinate K(+).

Heterodimer of an alpha and a beta chain. Requires thiamine diphosphate as cofactor.

The protein localises to the plastid. It localises to the chloroplast. The catalysed reaction is N(6)-[(R)-lipoyl]-L-lysyl-[protein] + pyruvate + H(+) = N(6)-[(R)-S(8)-acetyldihydrolipoyl]-L-lysyl-[protein] + CO2. Its function is as follows. The pyruvate dehydrogenase complex catalyzes the overall conversion of pyruvate to acetyl-CoA and CO(2). It contains multiple copies of three enzymatic components: pyruvate dehydrogenase (E1), dihydrolipoamide acetyltransferase (E2) and lipoamide dehydrogenase (E3). This chain is Pyruvate dehydrogenase E1 component subunit beta (pdhB), found in Chaetosphaeridium globosum (Charophycean green alga).